Here is a 445-residue protein sequence, read N- to C-terminus: Phosphoglucosamine mutase (445 aa).

Catalysis depends on Ser-102, which acts as the Phosphoserine intermediate. Residues Ser-102, Asp-240, Asp-242, and Asp-244 each contribute to the Mg(2+) site. Ser-102 bears the Phosphoserine mark.

This sequence belongs to the phosphohexose mutase family. Requires Mg(2+) as cofactor. In terms of processing, activated by phosphorylation.

It carries out the reaction alpha-D-glucosamine 1-phosphate = D-glucosamine 6-phosphate. Functionally, catalyzes the conversion of glucosamine-6-phosphate to glucosamine-1-phosphate. This is Phosphoglucosamine mutase from Mycolicibacterium vanbaalenii (strain DSM 7251 / JCM 13017 / BCRC 16820 / KCTC 9966 / NRRL B-24157 / PYR-1) (Mycobacterium vanbaalenii).